Here is a 320-residue protein sequence, read N- to C-terminus: Malate dehydrogenase (320 aa).

Residues 10–15 (GAGQIG) and Asp34 each bind NAD(+). Substrate is bound by residues Arg83 and Arg89. NAD(+) contacts are provided by residues Asn96 and 119 to 121 (ITN). Asn121 and Arg152 together coordinate substrate. His176 functions as the Proton acceptor in the catalytic mechanism.

The protein belongs to the LDH/MDH superfamily. MDH type 3 family.

The catalysed reaction is (S)-malate + NAD(+) = oxaloacetate + NADH + H(+). Catalyzes the reversible oxidation of malate to oxaloacetate. This is Malate dehydrogenase from Ruegeria pomeroyi (strain ATCC 700808 / DSM 15171 / DSS-3) (Silicibacter pomeroyi).